We begin with the raw amino-acid sequence, 260 residues long: Proansamycin X synthase (260 aa).

Cys73 serves as the catalytic Acyl-thioester intermediate. Residues His111 and Asp126 contribute to the active site.

This sequence belongs to the arylamine N-acetyltransferase family.

Its pathway is antibiotic biosynthesis; rifamycin B biosynthesis. Catalyzes the release of the completed linear polyketide from the rif PKS by forming an intramolecular amide bond, in this way terminating polyketide assembly and forming the macrocyclic compound proansamycin X, an intermediate in the rifamycin B biosynthesis. The sequence is that of Proansamycin X synthase (rifF) from Amycolatopsis mediterranei (strain S699) (Nocardia mediterranei).